Reading from the N-terminus, the 707-residue chain is Choline transporter-like protein 4 (707 aa).

The Cytoplasmic portion of the chain corresponds to 1–32; that stretch reads MGKKQKENEAYGNSAKYDPSFRGPIKNRGCTD. A helical transmembrane segment spans residues 33–53; it reads IICCVLFLVFILGYIVVGLVA. Residues 54–227 are Extracellular-facing; the sequence is WVYGDPRQVL…KIFEDFAQSW (174 aa). N67, N185, N195, and N196 each carry an N-linked (GlcNAc...) asparagine glycan. Residues 228 to 248 traverse the membrane as a helical segment; sequence YWILVALGVALVLSLLFILLL. Residues 249–250 are Cytoplasmic-facing; it reads RL. Residues 251–271 form a helical membrane-spanning segment; sequence VAAPLVLLLIVGVLAVLAYGI. Residues 272-307 lie on the Extracellular side of the membrane; it reads YHCWQQYRELRDQGVSITQLGFTANLSAYQNVKETW. The N-linked (GlcNAc...) asparagine glycan is linked to N296. The helical transmembrane segment at 308-328 threads the bilayer; sequence LAALIILAVLEGVLLLMLIFL. Residues 329 to 356 lie on the Cytoplasmic side of the membrane; it reads RQRIRIAIALLKEASRAVGQMMSTMFYP. Residues 357 to 377 traverse the membrane as a helical segment; the sequence is LVTFVLLVICIGYWAVTALYL. At 378–452 the chain is on the extracellular side; sequence ATSGQPQYVY…GILGLFWTVN (75 aa). N-linked (GlcNAc...) asparagine glycans are attached at residues N391, N403, and N413. Residues 453–473 form a helical membrane-spanning segment; it reads WVLALGQCVLAGAFASFYWAF. The Cytoplasmic portion of the chain corresponds to 474 to 498; the sequence is HKPRDIPTFPLSSAFIRTLRYHTGS. The helical transmembrane segment at 499-519 threads the bilayer; the sequence is LAFGALILTLVQIARVILEYI. The Extracellular portion of the chain corresponds to 520 to 557; the sequence is DHKLRGSQNPVARCIICCFKCCLWCLEKFIKFLNRNAY. Residues 558 to 578 form a helical membrane-spanning segment; sequence IMIAIYGKNFCVSAKNAFMLL. The Cytoplasmic portion of the chain corresponds to 579–594; the sequence is MRNVVRVVVLDKVTDL. A helical membrane pass occupies residues 595–615; that stretch reads LLFFGKLLVVGGVGVLSFFFF. The Extracellular segment spans residues 616–635; it reads SGRIKGLGKDFKNPDLNYYW. Residues 636-656 form a helical membrane-spanning segment; it reads LPIMTSIMGAYVIASGFFSVF. At 657-707 the chain is on the cytoplasmic side; that stretch reads GMCVDTLFLCFLEDLERNDGSQERPYYMPKALLKILGKKNEVPTGGKNRKK.

This sequence belongs to the CTL (choline transporter-like) family. In terms of processing, N-glycosylated; N-glycosylation of Asn-67 and Asn-391 is required for a proper thiamine pyrophosphate uptake. In terms of tissue distribution, highly expressed in intestine, kidney and stomach. Also expressed in testis and lung.

Its subcellular location is the membrane. It localises to the apical cell membrane. The catalysed reaction is choline(out) + n H(+)(in) = choline(in) + n H(+)(out). It catalyses the reaction thiamine diphosphate(out) = thiamine diphosphate(in). In terms of biological role, choline transporter that plays a role in the choline-acetylcholine system and is required to the efferent innervation of hair cells in the olivocochlear bundle for the maintenance of physiological function of outer hair cells and the protection of hair cells from acoustic injury. Also described as a thiamine pyrophosphate transporter in colon, may mediate the absorption of microbiota-generated thiamine pyrophosphate and contribute to host thiamine (vitamin B1) homeostasis. The chain is Choline transporter-like protein 4 from Rattus norvegicus (Rat).